The sequence spans 876 residues: Translation initiation factor IF-2 (876 aa).

The tr-type G domain occupies 378 to 547 (TRPPIITIMG…LTQSEMLELK (170 aa)). A G1 region spans residues 387 to 394 (GHVDHGKT). GTP is bound at residue 387 to 394 (GHVDHGKT). The segment at 412–416 (RITQH) is G2. Residues 433-436 (DTPG) form a G3 region. Residues 433–437 (DTPGH) and 487–490 (NKID) each bind GTP. The G4 stretch occupies residues 487–490 (NKID). The interval 523-525 (SAK) is G5.

It belongs to the TRAFAC class translation factor GTPase superfamily. Classic translation factor GTPase family. IF-2 subfamily.

The protein resides in the cytoplasm. Its function is as follows. One of the essential components for the initiation of protein synthesis. Protects formylmethionyl-tRNA from spontaneous hydrolysis and promotes its binding to the 30S ribosomal subunits. Also involved in the hydrolysis of GTP during the formation of the 70S ribosomal complex. The protein is Translation initiation factor IF-2 of Buchnera aphidicola subsp. Baizongia pistaciae (strain Bp).